We begin with the raw amino-acid sequence, 87 residues long: uncharacterized protein (87 aa).

The protein to H.pylori HP0495/JHP0447.

This is an uncharacterized protein from Campylobacter jejuni subsp. jejuni serotype O:2 (strain ATCC 700819 / NCTC 11168).